Consider the following 313-residue polypeptide: Ribosomal RNA small subunit methyltransferase H (313 aa).

Residues 35–37, Asp55, Phe79, Asp100, and Gln107 each bind S-adenosyl-L-methionine; that span reads GGH.

Belongs to the methyltransferase superfamily. RsmH family.

The protein resides in the cytoplasm. The catalysed reaction is cytidine(1402) in 16S rRNA + S-adenosyl-L-methionine = N(4)-methylcytidine(1402) in 16S rRNA + S-adenosyl-L-homocysteine + H(+). Functionally, specifically methylates the N4 position of cytidine in position 1402 (C1402) of 16S rRNA. This chain is Ribosomal RNA small subunit methyltransferase H, found in Burkholderia orbicola (strain AU 1054).